A 282-amino-acid polypeptide reads, in one-letter code: 2-dehydro-3-deoxyphosphooctonate aldolase (282 aa).

Belongs to the KdsA family.

Its subcellular location is the cytoplasm. It carries out the reaction D-arabinose 5-phosphate + phosphoenolpyruvate + H2O = 3-deoxy-alpha-D-manno-2-octulosonate-8-phosphate + phosphate. It functions in the pathway carbohydrate biosynthesis; 3-deoxy-D-manno-octulosonate biosynthesis; 3-deoxy-D-manno-octulosonate from D-ribulose 5-phosphate: step 2/3. The protein operates within bacterial outer membrane biogenesis; lipopolysaccharide biosynthesis. The protein is 2-dehydro-3-deoxyphosphooctonate aldolase of Shewanella sp. (strain ANA-3).